Consider the following 78-residue polypeptide: Conotoxin Bu2 (78 aa).

The signal sequence occupies residues 1–19 (MKLTCVLIIAVLFLTAITA). The propeptide occupies 20-41 (DDSRDKQVYRAVGLIDKMRRIR). Cystine bridges form between cysteine 46-cysteine 59, cysteine 53-cysteine 64, and cysteine 58-cysteine 73.

This sequence belongs to the conotoxin O1 superfamily. In terms of tissue distribution, expressed by the venom duct.

Its subcellular location is the secreted. The polypeptide is Conotoxin Bu2 (Conus bullatus (Bubble cone)).